A 206-amino-acid polypeptide reads, in one-letter code: Imidazoleglycerol-phosphate dehydratase (206 aa).

It belongs to the imidazoleglycerol-phosphate dehydratase family.

Its subcellular location is the cytoplasm. It carries out the reaction D-erythro-1-(imidazol-4-yl)glycerol 3-phosphate = 3-(imidazol-4-yl)-2-oxopropyl phosphate + H2O. It functions in the pathway amino-acid biosynthesis; L-histidine biosynthesis; L-histidine from 5-phospho-alpha-D-ribose 1-diphosphate: step 6/9. In Cutibacterium acnes (strain DSM 16379 / KPA171202) (Propionibacterium acnes), this protein is Imidazoleglycerol-phosphate dehydratase.